The primary structure comprises 664 residues: Probable L-type lectin-domain containing receptor kinase V.3 (664 aa).

The first 26 residues, 1–26, serve as a signal peptide directing secretion; the sequence is MSMSCKINWLMVLVIIALSNLESSLG. Over 27–278 the chain is Extracellular; that stretch reads RLVFEGSAGL…YPKAESQVKL (252 aa). Positions 28-250 are legume-lectin like; it reads LVFEGSAGLM…AIHYMWMWYV (223 aa). Asn-69, Asn-116, Asn-122, Asn-174, and Asn-197 each carry an N-linked (GlcNAc...) asparagine glycan. Residues 279 to 299 traverse the membrane as a helical segment; sequence IVLVTFLTLALFVALAASALI. The Cytoplasmic segment spans residues 300–664; that stretch reads VFFYKRHKKL…LPSGRPRLFL (365 aa). Residues 335-617 enclose the Protein kinase domain; sequence NGFKQLLGEG…GVSELPDNLL (283 aa). ATP contacts are provided by residues 341–349 and Lys-364; that span reads LGEGGFGPV. Asp-461 (proton acceptor) is an active-site residue.

This sequence in the C-terminal section; belongs to the protein kinase superfamily. Ser/Thr protein kinase family. The protein in the N-terminal section; belongs to the leguminous lectin family.

Its subcellular location is the cell membrane. The enzyme catalyses L-seryl-[protein] + ATP = O-phospho-L-seryl-[protein] + ADP + H(+). It catalyses the reaction L-threonyl-[protein] + ATP = O-phospho-L-threonyl-[protein] + ADP + H(+). The polypeptide is Probable L-type lectin-domain containing receptor kinase V.3 (LECRK53) (Arabidopsis thaliana (Mouse-ear cress)).